Consider the following 214-residue polypeptide: Transmembrane emp24 domain-containing protein p24beta3 (214 aa).

Residues 1-27 form the signal peptide; it reads MERRQAKIHVFVLIGLILLNSINQISS. The Lumenal portion of the chain corresponds to 28–178; sequence LSVTVNDEEC…RHTNESTRKR (151 aa). Residues 35 to 122 form the GOLD domain; it reads EECVQEYVLY…PETVSFYIHV (88 aa). Residues 140–158 adopt a coiled-coil conformation; the sequence is VNVKIAELREALESVVAEQ. Omega-N-methylated arginine is present on residues arginine 164 and arginine 169. Residue asparagine 172 is glycosylated (N-linked (GlcNAc...) asparagine). The chain crosses the membrane as a helical span at residues 179–199; it reads VIFYTVGEYIFLAAASGLQVL. Residues 200–214 are Cytoplasmic-facing; the sequence is YIRKLFSKSVAYNRV. The short motif at 204-205 is the COPII vesicle coat-binding element; the sequence is LF. The COPI vesicle coat-binding signature appears at 204-214; that stretch reads LFSKSVAYNRV. The short motif at 213 to 214 is the Required for the export from the endoplasmic reticulum to the Golgi element; the sequence is RV.

Belongs to the EMP24/GP25L family. In terms of assembly, probably oligomerizes with other members of the EMP24/GP25L family. Associates with the COPI vesicle coat (coatomer). Associates with the COPII vesicle coat (coatomer).

It is found in the golgi apparatus. The protein resides in the cis-Golgi network membrane. It localises to the golgi stack membrane. Its function is as follows. Involved in vesicular protein trafficking. Mainly functions in the early secretory pathway but also in post-Golgi membranes. Thought to act as cargo receptor at the lumenal side for incorporation of secretory cargo molecules into transport vesicles and to be involved in vesicle coat formation at the cytoplasmic side. This Arabidopsis thaliana (Mouse-ear cress) protein is Transmembrane emp24 domain-containing protein p24beta3.